The sequence spans 212 residues: UDP-N-acetylglucosamine transferase subunit ALG13 (212 aa).

The protein belongs to the glycosyltransferase 28 family. As to quaternary structure, heterodimer with ALG14 to form a functional enzyme.

The protein resides in the endoplasmic reticulum. It catalyses the reaction an N-acetyl-alpha-D-glucosaminyl-diphospho-di-trans,poly-cis-dolichol + UDP-N-acetyl-alpha-D-glucosamine = an N,N'-diacetylchitobiosyl-diphospho-di-trans,poly-cis-dolichol + UDP + H(+). Functionally, involved in protein N-glycosylation. Essential for the second step of the dolichol-linked oligosaccharide pathway. In Debaryomyces hansenii (strain ATCC 36239 / CBS 767 / BCRC 21394 / JCM 1990 / NBRC 0083 / IGC 2968) (Yeast), this protein is UDP-N-acetylglucosamine transferase subunit ALG13 (ALG13).